We begin with the raw amino-acid sequence, 923 residues long: RNA polymerase-associated protein RapA (923 aa).

The Helicase ATP-binding domain maps to 162–332 (EVGNRVNPRV…FARLRLLDPE (171 aa)). ATP is bound at residue 175-182 (DEVGLGKT). The DEAH box signature appears at 278–281 (DEAH). The region spanning 443–597 (KIDWLIDFLK…TCPMGMALFS (155 aa)) is the Helicase C-terminal domain.

The protein belongs to the SNF2/RAD54 helicase family. RapA subfamily. Interacts with the RNAP. Has a higher affinity for the core RNAP than for the holoenzyme. Its ATPase activity is stimulated by binding to RNAP.

Its function is as follows. Transcription regulator that activates transcription by stimulating RNA polymerase (RNAP) recycling in case of stress conditions such as supercoiled DNA or high salt concentrations. Probably acts by releasing the RNAP, when it is trapped or immobilized on tightly supercoiled DNA. Does not activate transcription on linear DNA. Probably not involved in DNA repair. The sequence is that of RNA polymerase-associated protein RapA from Haemophilus influenzae (strain PittEE).